A 372-amino-acid chain; its full sequence is Phospho-N-acetylmuramoyl-pentapeptide-transferase (372 aa).

10 helical membrane passes run 25-45 (RSLL…PVMI), 73-93 (TMGG…WADL), 98-118 (VWIV…DDWI), 134-154 (FFWT…IAQN), 176-196 (SIPL…YLVI), 211-231 (GLAI…AYLA), 251-271 (LVVI…YNAH), 275-295 (IFMG…IAVM), 300-320 (IVFA…FLQI), and 349-369 (QVVT…LMTL).

Belongs to the glycosyltransferase 4 family. MraY subfamily. It depends on Mg(2+) as a cofactor.

The protein localises to the cell inner membrane. It catalyses the reaction UDP-N-acetyl-alpha-D-muramoyl-L-alanyl-gamma-D-glutamyl-meso-2,6-diaminopimeloyl-D-alanyl-D-alanine + di-trans,octa-cis-undecaprenyl phosphate = di-trans,octa-cis-undecaprenyl diphospho-N-acetyl-alpha-D-muramoyl-L-alanyl-D-glutamyl-meso-2,6-diaminopimeloyl-D-alanyl-D-alanine + UMP. It functions in the pathway cell wall biogenesis; peptidoglycan biosynthesis. Catalyzes the initial step of the lipid cycle reactions in the biosynthesis of the cell wall peptidoglycan: transfers peptidoglycan precursor phospho-MurNAc-pentapeptide from UDP-MurNAc-pentapeptide onto the lipid carrier undecaprenyl phosphate, yielding undecaprenyl-pyrophosphoryl-MurNAc-pentapeptide, known as lipid I. This chain is Phospho-N-acetylmuramoyl-pentapeptide-transferase, found in Acinetobacter baylyi (strain ATCC 33305 / BD413 / ADP1).